Consider the following 142-residue polypeptide: Antirestriction protein KlcA (142 aa).

The protein belongs to the antirestriction protein family.

Could be involved in overcoming restriction barriers during establishment after conjugative transfer. The polypeptide is Antirestriction protein KlcA (klcA) (Escherichia coli).